A 321-amino-acid chain; its full sequence is Lipoyl synthase (321 aa).

Residues Cys-68, Cys-73, Cys-79, Cys-94, Cys-98, Cys-101, and Ser-308 each coordinate [4Fe-4S] cluster. The 218-residue stretch at 80–297 (FNHGTATFMI…REFAESIGFT (218 aa)) folds into the Radical SAM core domain.

The protein belongs to the radical SAM superfamily. Lipoyl synthase family. The cofactor is [4Fe-4S] cluster.

Its subcellular location is the cytoplasm. The enzyme catalyses [[Fe-S] cluster scaffold protein carrying a second [4Fe-4S](2+) cluster] + N(6)-octanoyl-L-lysyl-[protein] + 2 oxidized [2Fe-2S]-[ferredoxin] + 2 S-adenosyl-L-methionine + 4 H(+) = [[Fe-S] cluster scaffold protein] + N(6)-[(R)-dihydrolipoyl]-L-lysyl-[protein] + 4 Fe(3+) + 2 hydrogen sulfide + 2 5'-deoxyadenosine + 2 L-methionine + 2 reduced [2Fe-2S]-[ferredoxin]. It functions in the pathway protein modification; protein lipoylation via endogenous pathway; protein N(6)-(lipoyl)lysine from octanoyl-[acyl-carrier-protein]: step 2/2. Its function is as follows. Catalyzes the radical-mediated insertion of two sulfur atoms into the C-6 and C-8 positions of the octanoyl moiety bound to the lipoyl domains of lipoate-dependent enzymes, thereby converting the octanoylated domains into lipoylated derivatives. The chain is Lipoyl synthase from Shewanella sediminis (strain HAW-EB3).